Consider the following 115-residue polypeptide: T cell receptor delta variable 1 (115 aa).

The first 21 residues, 1–21 (MLFSSLLCVFVAFSYSGSSVA), serve as a signal peptide directing secretion. The Ig-like domain maps to 22 to 115 (QKVTQAQSSV…SAKYFCALGE (94 aa)). The cysteines at positions 43 and 111 are disulfide-linked.

In terms of assembly, gamma-delta TR is a heterodimer composed of a gamma and delta chain; disulfide-linked. The gamma-delta TR is associated with the transmembrane signaling CD3 coreceptor proteins following the stoichiometry: a single gamma-delta TR heterodimer associates with one CD3D-CD3E heterodimer, one CD3G-CD3E heterodimer and one CD247 homodimer forming a stable octameric structure. Upon activation, gamma-delta TR complex associates with FCER1G to initiate intracellular signaling.

Its subcellular location is the cell membrane. V region of the variable domain of T cell receptor (TR) delta chain that participates in the antigen recognition. Gamma-delta TRs recognize a variety of self and foreign non-peptide antigens frequently expressed at the epithelial boundaries between the host and external environment, including endogenous lipids presented by MH-like protein CD1D and phosphoantigens presented by butyrophilin-like molecule BTN3A1. Upon antigen recognition induces rapid, innate-like immune responses involved in pathogen clearance and tissue repair. Binding of gamma-delta TR complex to antigen triggers phosphorylation of immunoreceptor tyrosine-based activation motifs (ITAMs) in the CD3 chains by the LCK and FYN kinases, allowing the recruitment, phosphorylation, and activation of ZAP70 that facilitates phosphorylation of the scaffolding proteins LCP2 and LAT. This lead to the formation of a supramolecular signalosome that recruits the phospholipase PLCG1, resulting in calcium mobilization and ERK activation, ultimately leading to T cell expansion and differentiation into effector cells. Gamma-delta TRs are produced through somatic rearrangement of a limited repertoire of variable (V), diversity (D), and joining (J) genes. The potential diversity of gamma-delta TRs is conferred by the unique ability to rearrange (D) genes in tandem and to utilize all three reading frames. The combinatorial diversity is considerably increased by the sequence exonuclease trimming and random nucleotide (N) region additions which occur during the V-(D)-J rearrangements. The sequence is that of T cell receptor delta variable 1 from Homo sapiens (Human).